The following is an 836-amino-acid chain: DNA gyrase subunit A (836 aa).

The 467-residue stretch at 34 to 500 (LPDARDGLKP…AGDVRDIEDI (467 aa)) folds into the Topo IIA-type catalytic domain. The O-(5'-phospho-DNA)-tyrosine intermediate role is filled by Y122. The GyrA-box motif lies at 527–533 (QKRGGQG).

The protein belongs to the type II topoisomerase GyrA/ParC subunit family. Heterotetramer, composed of two GyrA and two GyrB chains. In the heterotetramer, GyrA contains the active site tyrosine that forms a transient covalent intermediate with DNA, while GyrB binds cofactors and catalyzes ATP hydrolysis.

It localises to the cytoplasm. It catalyses the reaction ATP-dependent breakage, passage and rejoining of double-stranded DNA.. A type II topoisomerase that negatively supercoils closed circular double-stranded (ds) DNA in an ATP-dependent manner to modulate DNA topology and maintain chromosomes in an underwound state. Negative supercoiling favors strand separation, and DNA replication, transcription, recombination and repair, all of which involve strand separation. Also able to catalyze the interconversion of other topological isomers of dsDNA rings, including catenanes and knotted rings. Type II topoisomerases break and join 2 DNA strands simultaneously in an ATP-dependent manner. This chain is DNA gyrase subunit A, found in Chlamydia trachomatis serovar D (strain ATCC VR-885 / DSM 19411 / UW-3/Cx).